The chain runs to 270 residues: ATP synthase subunit a (270 aa).

A run of 5 helical transmembrane segments spans residues 37–57 (NVHI…LWVF), 98–118 (VAPL…MDLI), 143–163 (DVNI…YYSI), 217–237 (VVFI…GALP), and 239–259 (AIFH…LTIV).

This sequence belongs to the ATPase A chain family. As to quaternary structure, F-type ATPases have 2 components, CF(1) - the catalytic core - and CF(0) - the membrane proton channel. CF(1) has five subunits: alpha(3), beta(3), gamma(1), delta(1), epsilon(1). CF(0) has three main subunits: a(1), b(2) and c(9-12). The alpha and beta chains form an alternating ring which encloses part of the gamma chain. CF(1) is attached to CF(0) by a central stalk formed by the gamma and epsilon chains, while a peripheral stalk is formed by the delta and b chains.

It localises to the cell inner membrane. Its function is as follows. Key component of the proton channel; it plays a direct role in the translocation of protons across the membrane. In Aliivibrio salmonicida (strain LFI1238) (Vibrio salmonicida (strain LFI1238)), this protein is ATP synthase subunit a.